A 354-amino-acid chain; its full sequence is Probable L-ascorbate-6-phosphate lactonase UlaG (354 aa).

Belongs to the UlaG family. A divalent metal cation is required as a cofactor.

The protein localises to the cytoplasm. The enzyme catalyses L-ascorbate 6-phosphate + H2O = 3-dehydro-L-gulonate 6-phosphate. The protein operates within cofactor degradation; L-ascorbate degradation; D-xylulose 5-phosphate from L-ascorbate: step 1/4. Functionally, probably catalyzes the hydrolysis of L-ascorbate-6-P into 3-keto-L-gulonate-6-P. Is essential for L-ascorbate utilization under anaerobic conditions. This Shigella boydii serotype 18 (strain CDC 3083-94 / BS512) protein is Probable L-ascorbate-6-phosphate lactonase UlaG.